The chain runs to 427 residues: Putative F-box/FBD/LRR-repeat protein At4g13965 (427 aa).

Positions 13-61 (ADRISQLPEALIIQILSLLPTEVAVTTSVLSKQWQFLWKMLPKLNFDSL) constitute an F-box domain. LRR repeat units follow at residues 67–93 (FKTF…HLIV), 98–122 (CNSM…VLEV), 141–168 (TLEL…HLHY), 169–194 (VDFK…VVHR), 213–241 (LTIY…KIVG), and 258–284 (SMIV…FLEF). The region spanning 346-396 (KWNKPKIVPECLLFHLETFMWKGYEWKRNDETEVAKYILSNTNRLKRATFF) is the FBD domain.

In Arabidopsis thaliana (Mouse-ear cress), this protein is Putative F-box/FBD/LRR-repeat protein At4g13965.